A 237-amino-acid polypeptide reads, in one-letter code: Purine nucleoside phosphorylase DeoD-type (237 aa).

H4 contacts a purine D-ribonucleoside. Residues G20, R24, R43, and 87–90 contribute to the phosphate site; that span reads RVGT. A purine D-ribonucleoside contacts are provided by residues 180 to 182 and 204 to 205; these read EME and SD. The active-site Proton donor is the D205.

Belongs to the PNP/UDP phosphorylase family. In terms of assembly, homohexamer; trimer of homodimers.

It catalyses the reaction a purine D-ribonucleoside + phosphate = a purine nucleobase + alpha-D-ribose 1-phosphate. It carries out the reaction a purine 2'-deoxy-D-ribonucleoside + phosphate = a purine nucleobase + 2-deoxy-alpha-D-ribose 1-phosphate. Catalyzes the reversible phosphorolytic breakdown of the N-glycosidic bond in the beta-(deoxy)ribonucleoside molecules, with the formation of the corresponding free purine bases and pentose-1-phosphate. The polypeptide is Purine nucleoside phosphorylase DeoD-type (Streptococcus suis (strain 98HAH33)).